A 552-amino-acid chain; its full sequence is Glutamyl-tRNA reductase 1, chloroplastic (552 aa).

Substrate is bound by residues 150 to 153 (TCNR), Ser-210, 215 to 217 (EGQ), and Gln-221. Cys-151 serves as the catalytic Nucleophile. 292-297 (GAGKMG) is a binding site for NADP(+).

This sequence belongs to the glutamyl-tRNA reductase family. In terms of tissue distribution, primarily in cotyledons and hypocotyls of greening cucumber seedlings.

The protein resides in the plastid. It is found in the chloroplast. It catalyses the reaction (S)-4-amino-5-oxopentanoate + tRNA(Glu) + NADP(+) = L-glutamyl-tRNA(Glu) + NADPH + H(+). It functions in the pathway porphyrin-containing compound metabolism; protoporphyrin-IX biosynthesis; 5-aminolevulinate from L-glutamyl-tRNA(Glu): step 1/2. Catalyzes the NADPH-dependent reduction of glutamyl-tRNA(Glu) to glutamate 1-semialdehyde (GSA). The polypeptide is Glutamyl-tRNA reductase 1, chloroplastic (HEMA1) (Cucumis sativus (Cucumber)).